Consider the following 738-residue polypeptide: Integrin beta-2-like protein (738 aa).

Residues 1–22 (MLGQCTLLPVLAGLLSLESALS) form the signal peptide. Topologically, residues 23-671 (QLCTKDNVST…LVCAEISNTT (649 aa)) are extracellular. Residues 24–74 (LCTKDNVSTCQDCIRSGPSCAWCQKLNFTGRGEPDSVRCDTPEQLLLKGCT) form the PSI domain. Cystine bridges form between Cys-25/Cys-419, Cys-33/Cys-43, Cys-36/Cys-73, Cys-46/Cys-62, Cys-218/Cys-258, Cys-358/Cys-372, Cys-421/Cys-439, Cys-431/Cys-442, Cys-444/Cys-453, Cys-455/Cys-486, Cys-469/Cys-484, Cys-478/Cys-489, Cys-491/Cys-506, Cys-508/Cys-531, Cys-513/Cys-529, Cys-521/Cys-534, Cys-536/Cys-545, Cys-547/Cys-570, Cys-554/Cys-568, Cys-562/Cys-573, Cys-575/Cys-584, Cys-594/Cys-603, and Cys-600/Cys-664. Residue Asn-29 is glycosylated (N-linked (GlcNAc...) asparagine). 8 N-linked (GlcNAc...) asparagine glycosylation sites follow: Asn-50, Asn-102, Asn-173, Asn-226, Asn-252, Asn-342, Asn-360, and Asn-386. Positions 126–329 (SVDLYFLMGL…DSSNVAQLIR (204 aa)) constitute a VWFA domain. I-EGF domains follow at residues 421–454 (CQEQ…KNCE), 455–507 (CQTQ…QYCE), 508–546 (CNNV…SACQ), and 547–585 (CRMS…PLCE). Asn-473 carries an N-linked (GlcNAc...) asparagine glycan. N-linked (GlcNAc...) asparagine glycans are attached at residues Asn-627 and Asn-669. A helical membrane pass occupies residues 672-692 (ILLGVIVGVLLAVIFLLVYCM). Residues 693-738 (VYLKGTQKAAKLPRKGGAQSTLAQQPHFQEPHHVEPVWNQERQGTQ) are Cytoplasmic-facing. The segment at 709–738 (GAQSTLAQQPHFQEPHHVEPVWNQERQGTQ) is disordered. Positions 710–719 (AQSTLAQQPH) are enriched in polar residues.

This sequence belongs to the integrin beta chain family. As to quaternary structure, monomer and homodimer. Unlike integrin beta chains, no alpha chain partner has yet been found. In terms of processing, N-glycosylated. In terms of tissue distribution, expressed predominantly in maturing and mature neutrophils.

The protein resides in the cell membrane. Functionally, during inflammatory stimulation, plays a role in retaining Cxcl13-expressing cells at the site of the inflammatory response. The sequence is that of Integrin beta-2-like protein from Mus musculus (Mouse).